Consider the following 170-residue polypeptide: F1 capsule antigen (170 aa).

Residues 1–21 (MKKISSVIAIALFGTIATANA) form the signal peptide. The interval 100-150 (GNNHQFTTKVIGKDSRDFDISPKVNGENLVGDDVVLATGSQDFFVRSIGSK) is contains potential antigenic determinants that may stimulate T-cells.

It is found in the secreted. The protein resides in the capsule. The polypeptide is F1 capsule antigen (caf1) (Yersinia pestis).